A 195-amino-acid chain; its full sequence is Glycerol-3-phosphate acyltransferase (195 aa).

5 helical membrane-spanning segments follow: residues glutamate 3–threonine 23, glycine 51–glycine 71, leucine 79–phenylalanine 99, isoleucine 111–valine 131, and leucine 153–valine 173.

Belongs to the PlsY family. In terms of assembly, probably interacts with PlsX.

It is found in the cell membrane. It catalyses the reaction an acyl phosphate + sn-glycerol 3-phosphate = a 1-acyl-sn-glycero-3-phosphate + phosphate. It participates in lipid metabolism; phospholipid metabolism. Its function is as follows. Catalyzes the transfer of an acyl group from acyl-phosphate (acyl-PO(4)) to glycerol-3-phosphate (G3P) to form lysophosphatidic acid (LPA). This enzyme utilizes acyl-phosphate as fatty acyl donor, but not acyl-CoA or acyl-ACP. The chain is Glycerol-3-phosphate acyltransferase from Syntrophomonas wolfei subsp. wolfei (strain DSM 2245B / Goettingen).